The following is a 208-amino-acid chain: Uracil phosphoribosyltransferase (208 aa).

5-phospho-alpha-D-ribose 1-diphosphate contacts are provided by residues arginine 78, arginine 103, and 130-138 (DPMLATGGS). Residues isoleucine 193 and 198–200 (GDA) contribute to the uracil site. Residue aspartate 199 coordinates 5-phospho-alpha-D-ribose 1-diphosphate.

The protein belongs to the UPRTase family. Mg(2+) is required as a cofactor.

The enzyme catalyses UMP + diphosphate = 5-phospho-alpha-D-ribose 1-diphosphate + uracil. The protein operates within pyrimidine metabolism; UMP biosynthesis via salvage pathway; UMP from uracil: step 1/1. Allosterically activated by GTP. Functionally, catalyzes the conversion of uracil and 5-phospho-alpha-D-ribose 1-diphosphate (PRPP) to UMP and diphosphate. This is Uracil phosphoribosyltransferase from Klebsiella pneumoniae subsp. pneumoniae (strain ATCC 700721 / MGH 78578).